A 155-amino-acid polypeptide reads, in one-letter code: Endoribonuclease YbeY (155 aa).

Positions 114, 118, and 124 each coordinate Zn(2+).

The protein belongs to the endoribonuclease YbeY family. It depends on Zn(2+) as a cofactor.

Its subcellular location is the cytoplasm. Single strand-specific metallo-endoribonuclease involved in late-stage 70S ribosome quality control and in maturation of the 3' terminus of the 16S rRNA. The sequence is that of Endoribonuclease YbeY from Escherichia coli O6:K15:H31 (strain 536 / UPEC).